The primary structure comprises 557 residues: Protein Red (557 aa).

Positions methionine 1–glutamate 90 are disordered. A compositionally biased stretch (basic and acidic residues) spans aspartate 16–serine 25. Over residues threonine 42 to serine 53 the composition is skewed to low complexity. N6-acetyllysine occurs at positions 98 and 137. Lysine 151 participates in a covalent cross-link: Glycyl lysine isopeptide (Lys-Gly) (interchain with G-Cter in SUMO2). The interval lysine 181–lysine 205 is disordered. Position 287 is a phosphoserine (serine 287). The segment covering arginine 294–lysine 303 has biased composition (basic residues). The tract at residues arginine 294 to serine 402 is disordered. A compositionally biased stretch (basic and acidic residues) spans glycine 304–glutamate 313. Glycyl lysine isopeptide (Lys-Gly) (interchain with G-Cter in SUMO2) cross-links involve residues lysine 310 and lysine 331. The segment covering threonine 332–lysine 398 has biased composition (basic and acidic residues). 17 repeat units span residues arginine 342–glutamate 343, arginine 344–glutamate 345, arginine 346–aspartate 347, arginine 348–glutamate 349, arginine 350–aspartate 351, arginine 352–aspartate 353, arginine 354–glutamate 355, arginine 356–aspartate 357, arginine 358–glutamate 359, arginine 360–aspartate 361, arginine 362–glutamate 363, arginine 364–glutamate 365, arginine 366–glutamate 367, arginine 368–aspartate 369, arginine 370–glutamate 371, arginine 372–glutamate 373, and arginine 374–glutamate 375. The tract at residues arginine 342–glutamate 375 is 17 X 2 AA tandem repeats of R-[ED]. Glycyl lysine isopeptide (Lys-Gly) (interchain with G-Cter in SUMO2) cross-links involve residues lysine 386, lysine 388, lysine 404, and lysine 408. Phosphoserine occurs at positions 417 and 460. Threonine 485 is subject to Phosphothreonine. Residues lysine 496, lysine 501, and lysine 509 each participate in a glycyl lysine isopeptide (Lys-Gly) (interchain with G-Cter in SUMO2) cross-link. Serine 536 bears the Phosphoserine mark. Glycyl lysine isopeptide (Lys-Gly) (interchain with G-Cter in SUMO2) cross-links involve residues lysine 541, lysine 543, and lysine 553.

The protein belongs to the RED family. In terms of assembly, component of the spliceosome B complex. Interacts with SMU1. Interacts with MAD1L1. May interact with DHX15. Ubiquitous.

It localises to the nucleus. The protein localises to the nucleoplasm. Its subcellular location is the chromosome. The protein resides in the cytoplasm. It is found in the cytoskeleton. It localises to the spindle pole. In terms of biological role, involved in pre-mRNA splicing as a component of the spliceosome. Auxiliary spliceosomal protein that regulates selection of alternative splice sites in a small set of target pre-mRNA species. Required for normal mitotic cell cycle progression. Recruits MAD1L1 and MAD2L1 to kinetochores, and is required to trigger the spindle assembly checkpoint. Required for normal accumulation of SMU1. This Mus musculus (Mouse) protein is Protein Red (Ik).